Consider the following 193-residue polypeptide: Ion-translocating oxidoreductase complex subunit A (193 aa).

Helical transmembrane passes span 5–25 (LLLF…FLGL), 39–59 (MGMG…AWLI), 63–83 (ILIP…VIAV), 102–122 (LLGI…VALL), 134–154 (ALYG…FAAI), and 171–191 (AIAL…NGLV).

It belongs to the NqrDE/RnfAE family. As to quaternary structure, the complex is composed of six subunits: RsxA, RsxB, RsxC, RsxD, RsxE and RsxG.

It is found in the cell inner membrane. In terms of biological role, part of a membrane-bound complex that couples electron transfer with translocation of ions across the membrane. Required to maintain the reduced state of SoxR. This chain is Ion-translocating oxidoreductase complex subunit A, found in Shigella sonnei (strain Ss046).